The chain runs to 103 residues: UPF0473 protein SGO_2040 (103 aa).

Belongs to the UPF0473 family.

The chain is UPF0473 protein SGO_2040 from Streptococcus gordonii (strain Challis / ATCC 35105 / BCRC 15272 / CH1 / DL1 / V288).